Consider the following 398-residue polypeptide: Succinate--CoA ligase [ADP-forming] subunit beta (398 aa).

An ATP-grasp domain is found at 9–254 (KALLKSFGAP…KTEEDAKEIE (246 aa)). ATP contacts are provided by residues Lys46, 53–55 (GRG), Glu109, Ala112, and Glu117. Mg(2+) is bound by residues Asn209 and Asp223. Substrate contacts are provided by residues Asn274 and 331-333 (GIM).

Belongs to the succinate/malate CoA ligase beta subunit family. Heterotetramer of two alpha and two beta subunits. Mg(2+) serves as cofactor.

The catalysed reaction is succinate + ATP + CoA = succinyl-CoA + ADP + phosphate. It catalyses the reaction GTP + succinate + CoA = succinyl-CoA + GDP + phosphate. The protein operates within carbohydrate metabolism; tricarboxylic acid cycle; succinate from succinyl-CoA (ligase route): step 1/1. In terms of biological role, succinyl-CoA synthetase functions in the citric acid cycle (TCA), coupling the hydrolysis of succinyl-CoA to the synthesis of either ATP or GTP and thus represents the only step of substrate-level phosphorylation in the TCA. The beta subunit provides nucleotide specificity of the enzyme and binds the substrate succinate, while the binding sites for coenzyme A and phosphate are found in the alpha subunit. The polypeptide is Succinate--CoA ligase [ADP-forming] subunit beta (Allorhizobium ampelinum (strain ATCC BAA-846 / DSM 112012 / S4) (Agrobacterium vitis (strain S4))).